The following is a 199-amino-acid chain: Venom allergen 5 (199 aa).

2 disulfides stabilise this stretch: cysteine 21–cysteine 87 and cysteine 167–cysteine 184. The region spanning 38–186 is the SCP domain; sequence LKVHNDERQK…FYKCYLACNY (149 aa). The disordered stretch occupies residues 47-67; the sequence is KVKAGQETRGNPGPQPAASNM.

It belongs to the CRISP family. Venom allergen 5-like subfamily. Expressed by the venom gland.

It localises to the secreted. The chain is Venom allergen 5 from Brachyponera chinensis (Asian needle ant).